An 868-amino-acid chain; its full sequence is Translation initiation factor IF-2 (868 aa).

2 disordered regions span residues 49-72 and 92-276; these read LSKQ…TSTL and KRSD…EHLK. A compositionally biased stretch (basic and acidic residues) spans 92–240; it reads KRSDIEEQQR…KKAEAEEVHL (149 aa). A tr-type G domain is found at 368 to 537; it reads SRAPVVTIMG…VLQSELLDLQ (170 aa). Residues 377 to 384 are G1; it reads GHVDHGKT. 377-384 is a binding site for GTP; the sequence is GHVDHGKT. The tract at residues 402–406 is G2; it reads GITQH. The G3 stretch occupies residues 423–426; sequence DTPG. Residues 423–427 and 477–480 contribute to the GTP site; these read DTPGH and NKMD. The G4 stretch occupies residues 477 to 480; sequence NKMD. Residues 513–515 form a G5 region; sequence SAK.

It belongs to the TRAFAC class translation factor GTPase superfamily. Classic translation factor GTPase family. IF-2 subfamily.

Its subcellular location is the cytoplasm. Functionally, one of the essential components for the initiation of protein synthesis. Protects formylmethionyl-tRNA from spontaneous hydrolysis and promotes its binding to the 30S ribosomal subunits. Also involved in the hydrolysis of GTP during the formation of the 70S ribosomal complex. This chain is Translation initiation factor IF-2, found in Alteromonas mediterranea (strain DSM 17117 / CIP 110805 / LMG 28347 / Deep ecotype).